The following is a 238-amino-acid chain: Gem-associated protein 8 (238 aa).

The disordered stretch occupies residues 66 to 127 (AGHPWDSQGQ…LESDSDDEVE (62 aa)). Composition is skewed to polar residues over residues 72–82 (SQGQHMAQQES) and 96–108 (LRNS…STRG). Acidic residues predominate over residues 113–127 (CEEEELESDSDDEVE). S122 bears the Phosphoserine mark. The stretch at 131–164 (SNMEITEELRQYFAQTERHREERRRQQQLDAERL) forms a coiled coil.

Part of the core SMN complex that contains SMN1, GEMIN2/SIP1, DDX20/GEMIN3, GEMIN4, GEMIN5, GEMIN6, GEMIN7, GEMIN8 and STRAP/UNRIP. Part of the SMN-Sm complex that contains SMN1, GEMIN2/SIP1, DDX20/GEMIN3, GEMIN4, GEMIN5, GEMIN6, GEMIN7, GEMIN8, STRAP/UNRIP and the Sm proteins SNRPB, SNRPD1, SNRPD2, SNRPD3, SNRPE, SNRPF and SNRPG. Interacts with GEMIN6; the interaction is direct. Interacts with GEMIN7; the interaction is direct. Interacts with SMN1; the interaction is direct. Interacts with GEMIN4; the interaction is direct. Widely expressed in embryonic tissues (at protein level).

The protein localises to the nucleus. Its subcellular location is the gem. It localises to the cytoplasm. Its function is as follows. The SMN complex catalyzes the assembly of small nuclear ribonucleoproteins (snRNPs), the building blocks of the spliceosome, and thereby plays an important role in the splicing of cellular pre-mRNAs. Most spliceosomal snRNPs contain a common set of Sm proteins SNRPB, SNRPD1, SNRPD2, SNRPD3, SNRPE, SNRPF and SNRPG that assemble in a heptameric protein ring on the Sm site of the small nuclear RNA to form the core snRNP (Sm core). In the cytosol, the Sm proteins SNRPD1, SNRPD2, SNRPE, SNRPF and SNRPG are trapped in an inactive 6S pICln-Sm complex by the chaperone CLNS1A that controls the assembly of the core snRNP. To assemble core snRNPs, the SMN complex accepts the trapped 5Sm proteins from CLNS1A forming an intermediate. Binding of snRNA inside 5Sm triggers eviction of the SMN complex, thereby allowing binding of SNRPD3 and SNRPB to complete assembly of the core snRNP. This is Gem-associated protein 8 (Gemin8) from Mus musculus (Mouse).